We begin with the raw amino-acid sequence, 209 residues long: Uracil phosphoribosyltransferase (209 aa).

Residues arginine 79, arginine 104, and 131–139 each bind 5-phospho-alpha-D-ribose 1-diphosphate; that span reads DPMLATGAS. Residues isoleucine 194 and 199-201 contribute to the uracil site; that span reads GDA. Aspartate 200 serves as a coordination point for 5-phospho-alpha-D-ribose 1-diphosphate.

It belongs to the UPRTase family. Requires Mg(2+) as cofactor.

It carries out the reaction UMP + diphosphate = 5-phospho-alpha-D-ribose 1-diphosphate + uracil. It participates in pyrimidine metabolism; UMP biosynthesis via salvage pathway; UMP from uracil: step 1/1. Allosterically activated by GTP. In terms of biological role, catalyzes the conversion of uracil and 5-phospho-alpha-D-ribose 1-diphosphate (PRPP) to UMP and diphosphate. The polypeptide is Uracil phosphoribosyltransferase (Staphylococcus carnosus (strain TM300)).